A 184-amino-acid polypeptide reads, in one-letter code: NADH-quinone oxidoreductase subunit B (184 aa).

Cysteine 37, cysteine 38, cysteine 103, and cysteine 132 together coordinate [4Fe-4S] cluster.

Belongs to the complex I 20 kDa subunit family. NDH-1 is composed of 14 different subunits. Subunits NuoB, C, D, E, F, and G constitute the peripheral sector of the complex. [4Fe-4S] cluster serves as cofactor.

The protein localises to the cell membrane. It catalyses the reaction a quinone + NADH + 5 H(+)(in) = a quinol + NAD(+) + 4 H(+)(out). In terms of biological role, NDH-1 shuttles electrons from NADH, via FMN and iron-sulfur (Fe-S) centers, to quinones in the respiratory chain. The immediate electron acceptor for the enzyme in this species is believed to be a menaquinone. Couples the redox reaction to proton translocation (for every two electrons transferred, four hydrogen ions are translocated across the cytoplasmic membrane), and thus conserves the redox energy in a proton gradient. The chain is NADH-quinone oxidoreductase subunit B from Mycolicibacterium vanbaalenii (strain DSM 7251 / JCM 13017 / BCRC 16820 / KCTC 9966 / NRRL B-24157 / PYR-1) (Mycobacterium vanbaalenii).